Here is a 351-residue protein sequence, read N- to C-terminus: Biotin synthase (351 aa).

Residues 49 to 265 form the Radical SAM core domain; that stretch reads NRVRIHILDN…LSVFRLVNPD (217 aa). [4Fe-4S] cluster contacts are provided by C64, C68, and C71. The [2Fe-2S] cluster site is built by C108, C140, C200, and R269.

This sequence belongs to the radical SAM superfamily. Biotin synthase family. As to quaternary structure, homodimer. Requires [4Fe-4S] cluster as cofactor. The cofactor is [2Fe-2S] cluster.

It catalyses the reaction (4R,5S)-dethiobiotin + (sulfur carrier)-SH + 2 reduced [2Fe-2S]-[ferredoxin] + 2 S-adenosyl-L-methionine = (sulfur carrier)-H + biotin + 2 5'-deoxyadenosine + 2 L-methionine + 2 oxidized [2Fe-2S]-[ferredoxin]. It functions in the pathway cofactor biosynthesis; biotin biosynthesis; biotin from 7,8-diaminononanoate: step 2/2. In terms of biological role, catalyzes the conversion of dethiobiotin (DTB) to biotin by the insertion of a sulfur atom into dethiobiotin via a radical-based mechanism. This is Biotin synthase from Leptospira biflexa serovar Patoc (strain Patoc 1 / Ames).